Reading from the N-terminus, the 812-residue chain is ISWI one complex protein 2 (812 aa).

4 disordered regions span residues 1 to 21, 614 to 646, 679 to 704, and 762 to 812; these read MRTK…AGAA, MGNS…KRKP, AKQR…LEEL, and QTGS…PPTN. Residues 627–638 are compositionally biased toward polar residues; it reads PQSTLEPSTKSS. Residues 673-714 are a coiled coil; that stretch reads ELKIIRAKQRKQQEDRERRKKMKEEKKRLEELAKKRELTESV. Positions 683 to 704 are enriched in basic and acidic residues; that stretch reads KQQEDRERRKKMKEEKKRLEEL. Positions 769–796 are enriched in low complexity; it reads PQAPQAPQTSQASIQPQQQQQQQQQQQP.

Component of the ISW1B complex, which at least consists of ISW1, IOC2 and IOC4.

Its subcellular location is the nucleus. Functionally, functions as a component of the ISW1B complex, which acts in remodeling the chromatin by catalyzing an ATP-dependent alteration in the structure of nucleosomal DNA. The ISW1B complex acts within coding regions to control the amount of RNA polymerase II released into productive elongation and to coordinate elongation with termination and pre-mRNA processing. In Saccharomyces cerevisiae (strain ATCC 204508 / S288c) (Baker's yeast), this protein is ISWI one complex protein 2 (IOC2).